We begin with the raw amino-acid sequence, 342 residues long: GTPase Obg (342 aa).

Residues 1-159 form the Obg domain; it reads MKFLDLCKVY…RTIWLRLKLI (159 aa). Residues 160–327 enclose the OBG-type G domain; that stretch reads ADAGLLGLPN…VLRALWAEID (168 aa). Residues 166 to 173, 191 to 195, 212 to 215, 279 to 282, and 308 to 310 contribute to the GTP site; these read GLPNAGKS, FTTLV, DIPG, NKID, and SGV. Residues Ser-173 and Thr-193 each coordinate Mg(2+).

This sequence belongs to the TRAFAC class OBG-HflX-like GTPase superfamily. OBG GTPase family. In terms of assembly, monomer. The cofactor is Mg(2+).

The protein resides in the cytoplasm. In terms of biological role, an essential GTPase which binds GTP, GDP and possibly (p)ppGpp with moderate affinity, with high nucleotide exchange rates and a fairly low GTP hydrolysis rate. Plays a role in control of the cell cycle, stress response, ribosome biogenesis and in those bacteria that undergo differentiation, in morphogenesis control. The sequence is that of GTPase Obg from Cereibacter sphaeroides (strain ATCC 17025 / ATH 2.4.3) (Rhodobacter sphaeroides).